The following is a 352-amino-acid chain: Glycerol-1-phosphate dehydrogenase [NAD(P)+] (352 aa).

NAD(+)-binding positions include 98-102 (GKAID) and 120-123 (TAAS). Asp-125 contacts substrate. Ser-129 serves as a coordination point for NAD(+). Asp-172 lines the substrate pocket. Positions 172 and 252 each coordinate Zn(2+). His-256 serves as a coordination point for substrate. His-268 is a Zn(2+) binding site.

It belongs to the glycerol-1-phosphate dehydrogenase family. Zn(2+) is required as a cofactor.

It is found in the cytoplasm. The enzyme catalyses sn-glycerol 1-phosphate + NAD(+) = dihydroxyacetone phosphate + NADH + H(+). It catalyses the reaction sn-glycerol 1-phosphate + NADP(+) = dihydroxyacetone phosphate + NADPH + H(+). Its pathway is membrane lipid metabolism; glycerophospholipid metabolism. Functionally, catalyzes the NAD(P)H-dependent reduction of dihydroxyacetonephosphate (DHAP or glycerone phosphate) to glycerol 1-phosphate (G1P). The G1P thus generated is used as the glycerophosphate backbone of phospholipids in the cellular membranes of Archaea. This is Glycerol-1-phosphate dehydrogenase [NAD(P)+] from Halobacterium salinarum (strain ATCC 29341 / DSM 671 / R1).